The sequence spans 85 residues: Large ribosomal subunit protein bL27 (85 aa).

The segment at 1–22 is disordered; sequence MAHKKAGGSTRNGRDSESKRLG.

It belongs to the bacterial ribosomal protein bL27 family.

The sequence is that of Large ribosomal subunit protein bL27 from Aliivibrio fischeri (strain ATCC 700601 / ES114) (Vibrio fischeri).